The sequence spans 311 residues: 26S proteasome regulatory subunit RPN11 (311 aa).

An MPN domain is found at 32–167 (VYISSLALLK…IDAFRLISPA (136 aa)). 3 residues coordinate Zn(2+): His114, His116, and Asp127. A JAMM motif motif is present at residues 114-127 (HSHPGFGCWLSSVD).

It belongs to the peptidase M67A family.

Functionally, acts as a regulatory subunit of the 26 proteasome which is involved in the ATP-dependent degradation of ubiquitinated proteins. In Eremothecium gossypii (strain ATCC 10895 / CBS 109.51 / FGSC 9923 / NRRL Y-1056) (Yeast), this protein is 26S proteasome regulatory subunit RPN11 (RPN11).